Reading from the N-terminus, the 317-residue chain is tRNA dimethylallyltransferase (317 aa).

13–20 (GPTASGKS) provides a ligand contact to ATP. 15-20 (TASGKS) contacts substrate.

Belongs to the IPP transferase family. As to quaternary structure, monomer. The cofactor is Mg(2+).

The catalysed reaction is adenosine(37) in tRNA + dimethylallyl diphosphate = N(6)-dimethylallyladenosine(37) in tRNA + diphosphate. Catalyzes the transfer of a dimethylallyl group onto the adenine at position 37 in tRNAs that read codons beginning with uridine, leading to the formation of N6-(dimethylallyl)adenosine (i(6)A). The chain is tRNA dimethylallyltransferase from Kineococcus radiotolerans (strain ATCC BAA-149 / DSM 14245 / SRS30216).